The primary structure comprises 379 residues: 8-amino-7-oxononanoate synthase (379 aa).

Residues Arg27 and Arg34 each contribute to the substrate site. 114-115 (GY) contacts pyridoxal 5'-phosphate. Residue His139 participates in substrate binding. Pyridoxal 5'-phosphate contacts are provided by residues Ser187, 212–215 (DDAH), and 232–235 (TLSK). An N6-(pyridoxal phosphate)lysine modification is found at Lys235. Residue Thr344 participates in substrate binding.

The protein belongs to the class-II pyridoxal-phosphate-dependent aminotransferase family. BioF subfamily. Homodimer. Pyridoxal 5'-phosphate serves as cofactor.

It catalyses the reaction 6-carboxyhexanoyl-[ACP] + L-alanine + H(+) = (8S)-8-amino-7-oxononanoate + holo-[ACP] + CO2. It functions in the pathway cofactor biosynthesis; biotin biosynthesis. In terms of biological role, catalyzes the decarboxylative condensation of pimeloyl-[acyl-carrier protein] and L-alanine to produce 8-amino-7-oxononanoate (AON), [acyl-carrier protein], and carbon dioxide. The polypeptide is 8-amino-7-oxononanoate synthase (Methylobacterium nodulans (strain LMG 21967 / CNCM I-2342 / ORS 2060)).